The primary structure comprises 292 residues: uncharacterized protein (292 aa).

10 consecutive transmembrane segments (helical) span residues 6 to 26 (LGII…KVGI), 32 to 52 (LLFS…ILFI), 68 to 88 (IIMS…GMQF), 94 to 114 (TSVL…FSLN), 123 to 143 (MGLV…MLNI), 147 to 167 (ALFG…ANVF), 182 to 202 (AWHL…FEAV), 214 to 234 (SLLF…FWVL), 242 to 262 (ASMA…LQLH), and 265 to 285 (ITIN…MNTF). EamA domains lie at 13 to 137 (LIWG…FIFG) and 159 to 285 (LSWG…MNTF).

The protein belongs to the EamA transporter family.

The protein localises to the cell membrane. This is an uncharacterized protein from Bacillus subtilis (strain 168).